Consider the following 393-residue polypeptide: Mitogen-activated protein kinase SIPK (393 aa).

Residues 1-11 (MDGSGQQTDTM) are compositionally biased toward polar residues. The disordered stretch occupies residues 1-31 (MDGSGQQTDTMMSDAGAEQPPPAPQPVAGMD). The 286-residue stretch at 60–345 (KPPILPIGKG…VEGALAHPYL (286 aa)) folds into the Protein kinase domain. ATP is bound by residues 66–74 (IGKGAYGIV) and lysine 89. The active-site Proton acceptor is aspartate 186. Residues 218 to 220 (TEY) carry the TXY motif.

Belongs to the protein kinase superfamily. CMGC Ser/Thr protein kinase family. MAP kinase subfamily. Interacts with SIPKK.

It carries out the reaction L-tyrosyl-[protein] + ATP = O-phospho-L-tyrosyl-[protein] + ADP + H(+). The enzyme catalyses L-seryl-[protein] + ATP = O-phospho-L-seryl-[protein] + ADP + H(+). The catalysed reaction is L-threonyl-[protein] + ATP = O-phospho-L-threonyl-[protein] + ADP + H(+). With respect to regulation, activated by threonine and tyrosine phosphorylation. Functionally, phosphorylates myelin basic protein (MBP) in vitro. May be involved in disease resistance. This is Mitogen-activated protein kinase SIPK from Nicotiana tabacum (Common tobacco).